The following is a 145-amino-acid chain: Protein SprT-like (145 aa).

Residues 5-141 (DYVREVSLAD…CGRCHGRLIK (137 aa)) form the SprT-like domain. Residue histidine 64 coordinates Zn(2+). The active site involves glutamate 65. Histidine 68 serves as a coordination point for Zn(2+).

The protein belongs to the SprT family. Zn(2+) serves as cofactor.

Its subcellular location is the cytoplasm. The chain is Protein SprT-like from Streptococcus equi subsp. zooepidemicus (strain H70).